The following is a 235-amino-acid chain: Thiamine import ATP-binding protein ThiQ (235 aa).

Residues 2 to 230 (LKLENLTYRY…TVPEAAILGM (229 aa)) form the ABC transporter domain. 32–39 (GPSGAGKS) is an ATP binding site.

It belongs to the ABC transporter superfamily. Thiamine importer (TC 3.A.1.19.1) family. In terms of assembly, the complex is composed of two ATP-binding proteins (ThiQ), two transmembrane proteins (ThiP) and a solute-binding protein (ThiB).

The protein localises to the cell inner membrane. The catalysed reaction is thiamine(out) + ATP + H2O = thiamine(in) + ADP + phosphate + H(+). Its function is as follows. Part of the ABC transporter complex ThiBPQ involved in thiamine import. Responsible for energy coupling to the transport system. The chain is Thiamine import ATP-binding protein ThiQ from Photorhabdus laumondii subsp. laumondii (strain DSM 15139 / CIP 105565 / TT01) (Photorhabdus luminescens subsp. laumondii).